We begin with the raw amino-acid sequence, 530 residues long: Phosphoenolpyruvate carboxykinase (ATP) 2 (530 aa).

Substrate contacts are provided by Arg54, Tyr191, and Lys197. ATP is bound by residues Lys197, His216, and Gly232–Thr240. Mn(2+) contacts are provided by Lys197 and His216. Asp253 lines the Mn(2+) pocket. Residues Glu281, Arg318, Arg437–Val438, and Thr443 each bind ATP. Arg318 lines the substrate pocket.

The protein belongs to the phosphoenolpyruvate carboxykinase (ATP) family. Requires Mn(2+) as cofactor.

The protein localises to the cytoplasm. The enzyme catalyses oxaloacetate + ATP = phosphoenolpyruvate + ADP + CO2. It participates in carbohydrate biosynthesis; gluconeogenesis. Its function is as follows. Involved in the gluconeogenesis. Catalyzes the conversion of oxaloacetate (OAA) to phosphoenolpyruvate (PEP) through direct phosphoryl transfer between the nucleoside triphosphate and OAA. The protein is Phosphoenolpyruvate carboxykinase (ATP) 2 of Salinibacter ruber (strain DSM 13855 / M31).